Consider the following 185-residue polypeptide: Elongation factor P (185 aa).

It belongs to the elongation factor P family.

Its subcellular location is the cytoplasm. It functions in the pathway protein biosynthesis; polypeptide chain elongation. Its function is as follows. Involved in peptide bond synthesis. Stimulates efficient translation and peptide-bond synthesis on native or reconstituted 70S ribosomes in vitro. Probably functions indirectly by altering the affinity of the ribosome for aminoacyl-tRNA, thus increasing their reactivity as acceptors for peptidyl transferase. The chain is Elongation factor P from Burkholderia vietnamiensis (strain G4 / LMG 22486) (Burkholderia cepacia (strain R1808)).